Consider the following 149-residue polypeptide: Large ribosomal subunit protein uL15 (149 aa).

A disordered region spans residues 30-63; that stretch reads GLGKTAGRGHKGSFARKGGGKIKPGFEGGQTPMQ. Residues 36-49 are compositionally biased toward basic residues; that stretch reads GRGHKGSFARKGGG.

The protein belongs to the universal ribosomal protein uL15 family. As to quaternary structure, part of the 50S ribosomal subunit.

In terms of biological role, binds to the 23S rRNA. The polypeptide is Large ribosomal subunit protein uL15 (Xylella fastidiosa (strain 9a5c)).